Consider the following 257-residue polypeptide: Imidazole glycerol phosphate synthase subunit HisF (257 aa).

Residues aspartate 11 and aspartate 130 contribute to the active site.

This sequence belongs to the HisA/HisF family. Heterodimer of HisH and HisF.

The protein resides in the cytoplasm. The catalysed reaction is 5-[(5-phospho-1-deoxy-D-ribulos-1-ylimino)methylamino]-1-(5-phospho-beta-D-ribosyl)imidazole-4-carboxamide + L-glutamine = D-erythro-1-(imidazol-4-yl)glycerol 3-phosphate + 5-amino-1-(5-phospho-beta-D-ribosyl)imidazole-4-carboxamide + L-glutamate + H(+). Its pathway is amino-acid biosynthesis; L-histidine biosynthesis; L-histidine from 5-phospho-alpha-D-ribose 1-diphosphate: step 5/9. IGPS catalyzes the conversion of PRFAR and glutamine to IGP, AICAR and glutamate. The HisF subunit catalyzes the cyclization activity that produces IGP and AICAR from PRFAR using the ammonia provided by the HisH subunit. In Pseudoalteromonas translucida (strain TAC 125), this protein is Imidazole glycerol phosphate synthase subunit HisF.